Reading from the N-terminus, the 23-residue chain is Cytochrome c oxidase subunit 7A-liver, mitochondrial (23 aa).

Belongs to the cytochrome c oxidase VIIa family. Component of the cytochrome c oxidase (complex IV, CIV), a multisubunit enzyme composed of 14 subunits. The complex is composed of a catalytic core of 3 subunits MT-CO1, MT-CO2 and MT-CO3, encoded in the mitochondrial DNA, and 11 supernumerary subunits COX4I, COX5A, COX5B, COX6A, COX6B, COX6C, COX7A, COX7B, COX7C, COX8 and NDUFA4, which are encoded in the nuclear genome. The complex exists as a monomer or a dimer and forms supercomplexes (SCs) in the inner mitochondrial membrane with NADH-ubiquinone oxidoreductase (complex I, CI) and ubiquinol-cytochrome c oxidoreductase (cytochrome b-c1 complex, complex III, CIII), resulting in different assemblies (supercomplex SCI(1)III(2)IV(1) and megacomplex MCI(2)III(2)IV(2)).

The protein localises to the mitochondrion inner membrane. It functions in the pathway energy metabolism; oxidative phosphorylation. Its function is as follows. Component of the cytochrome c oxidase, the last enzyme in the mitochondrial electron transport chain which drives oxidative phosphorylation. The respiratory chain contains 3 multisubunit complexes succinate dehydrogenase (complex II, CII), ubiquinol-cytochrome c oxidoreductase (cytochrome b-c1 complex, complex III, CIII) and cytochrome c oxidase (complex IV, CIV), that cooperate to transfer electrons derived from NADH and succinate to molecular oxygen, creating an electrochemical gradient over the inner membrane that drives transmembrane transport and the ATP synthase. Cytochrome c oxidase is the component of the respiratory chain that catalyzes the reduction of oxygen to water. Electrons originating from reduced cytochrome c in the intermembrane space (IMS) are transferred via the dinuclear copper A center (CU(A)) of subunit 2 and heme A of subunit 1 to the active site in subunit 1, a binuclear center (BNC) formed by heme A3 and copper B (CU(B)). The BNC reduces molecular oxygen to 2 water molecules using 4 electrons from cytochrome c in the IMS and 4 protons from the mitochondrial matrix. The protein is Cytochrome c oxidase subunit 7A-liver, mitochondrial of Oncorhynchus mykiss (Rainbow trout).